The sequence spans 667 residues: Zeaxanthin epoxidase, chloroplastic (667 aa).

A chloroplast-targeting transit peptide spans 1-59 (MGSTPFCYSINPSPSKLDFTRTHVFSPVSKQFYLDLSSFSGKPGGVSGFRSRRALLGVK). FAD-binding positions include 82 to 110 (RVLVAGGGIGGLVFALAAKKKGFDVLVFE) and 360 to 373 (GFTWGKGRVTLLGD). An FHA domain is found at 558-612 (CIVGSEPDQDFPGMRIVIPSSQVSKMHARVIYKDGAFFLMDLRSEHGTYVTDNEG).

FAD serves as cofactor. As to expression, expressed in leaves, stems and flowers, and at lower levels in roots and siliques.

It localises to the plastid. It is found in the chloroplast. It carries out the reaction all-trans-zeaxanthin + 4 reduced [2Fe-2S]-[ferredoxin] + 2 O2 + 4 H(+) = all-trans-violaxanthin + 4 oxidized [2Fe-2S]-[ferredoxin] + 2 H2O. It participates in plant hormone biosynthesis; abscisate biosynthesis. In terms of biological role, zeaxanthin epoxidase that plays an important role in the xanthophyll cycle and abscisic acid (ABA) biosynthesis. Converts zeaxanthin into antheraxanthin and subsequently violaxanthin. Required for resistance to osmotic and drought stresses, ABA-dependent stomatal closure, seed development and dormancy, modulation of defense gene expression and disease resistance and non-photochemical quencing (NPQ). Through its role in ABA biosynthesis, regulates the expression of stress-responsive genes such as RD29A during osmotic stress and is required for normal plant growth during vegetative development. Is required for late skotomorphogenic growth through its role in the xanthophyll carotenoids neoxanthin, violaxanthin and antheraxanthin biosynthesis. Required for beta-aminobutyric acid (BABA)-induced priming in disease resistance, tolerance to salt and drought stresses and sterility. Participates in NPQ by regulating the level of zeaxanthin in photosynthetic energy conversion. NPQ is a process that maintains the balance between dissipation and utilization of light energy to minimize the generation of oxidizing molecules and the molecular damages they can generate. This Arabidopsis thaliana (Mouse-ear cress) protein is Zeaxanthin epoxidase, chloroplastic (ZEP).